The chain runs to 27 residues: uncharacterized protein (27 aa).

A helical membrane pass occupies residues 6-26 (IIVLGALIALLELIRFLLQLL).

It belongs to the DinQ family.

The protein resides in the cell inner membrane. This is an uncharacterized protein from Escherichia coli (strain K12).